A 455-amino-acid chain; its full sequence is 1-deoxy-D-xylulose 5-phosphate reductoisomerase (455 aa).

Residues Thr-30, Gly-31, Ser-32, Ile-33, Gln-63, and Asn-159 each contribute to the NADPH site. Lys-160 provides a ligand contact to 1-deoxy-D-xylulose 5-phosphate. Position 161 (Glu-161) interacts with NADPH. Asp-185 serves as a coordination point for Mn(2+). 1-deoxy-D-xylulose 5-phosphate is bound by residues Ser-186 and Glu-187. Glu-187 is a Mn(2+) binding site. A compositionally biased stretch (polar residues) spans 205-214 (YATAKQSIQP). The interval 205–233 (YATAKQSIQPESVRATDPPSSTTDSPAKT) is disordered. 2 residues coordinate 1-deoxy-D-xylulose 5-phosphate: Ser-246 and His-269. Gly-275 lines the NADPH pocket. Residues Ser-282, Asn-287, Lys-288, and Glu-291 each contribute to the 1-deoxy-D-xylulose 5-phosphate site. Glu-291 provides a ligand contact to Mn(2+).

The protein belongs to the DXR family. Requires Mg(2+) as cofactor. The cofactor is Mn(2+).

It catalyses the reaction 2-C-methyl-D-erythritol 4-phosphate + NADP(+) = 1-deoxy-D-xylulose 5-phosphate + NADPH + H(+). It participates in isoprenoid biosynthesis; isopentenyl diphosphate biosynthesis via DXP pathway; isopentenyl diphosphate from 1-deoxy-D-xylulose 5-phosphate: step 1/6. Functionally, catalyzes the NADPH-dependent rearrangement and reduction of 1-deoxy-D-xylulose-5-phosphate (DXP) to 2-C-methyl-D-erythritol 4-phosphate (MEP). This chain is 1-deoxy-D-xylulose 5-phosphate reductoisomerase, found in Rhodopirellula baltica (strain DSM 10527 / NCIMB 13988 / SH1).